The following is a 424-amino-acid chain: CinA-like protein (424 aa).

The protein belongs to the CinA family.

This is CinA-like protein from Shewanella halifaxensis (strain HAW-EB4).